A 429-amino-acid polypeptide reads, in one-letter code: 28S rRNA (cytosine-C(5))-methyltransferase (429 aa).

Residue Gly2 is modified to N-acetylglycine. Ser167 carries the phosphoserine modification. S-adenosyl-L-methionine contacts are provided by residues 234-240 (CAAPGNK), Asp258, Arg263, and Asp305. The active-site Nucleophile is Cys359.

This sequence belongs to the class I-like SAM-binding methyltransferase superfamily. RsmB/NOP family. As to expression, ubiquitous. Detected in placenta, heart and skeletal muscle.

The protein resides in the nucleus. It localises to the nucleolus. It carries out the reaction cytidine(3782) in 28S rRNA + S-adenosyl-L-methionine = 5-methylcytidine(3782) in 28S rRNA + S-adenosyl-L-homocysteine + H(+). Functionally, S-adenosyl-L-methionine-dependent methyltransferase that specifically methylates the C(5) position of cytosine 3782 (m5C3782) in 28S rRNA. m5C3782 promotes protein translation without affecting ribosome biogenesis and fidelity. Required for corpus callosum and cerebral cortex development. This Homo sapiens (Human) protein is 28S rRNA (cytosine-C(5))-methyltransferase.